We begin with the raw amino-acid sequence, 741 residues long: 2-5A-dependent ribonuclease (741 aa).

Residues 1 to 21 (MESRDHNNPQEGPTSSSGRRA) form a disordered region. Positions 9–18 (PQEGPTSSSG) are enriched in polar residues. ANK repeat units lie at residues 24–53 (EDNH…NVNF), 58–87 (GGWT…DPVL), 91–120 (NGAT…DVNE), 124–153 (YGFT…NVNL), 167–197 (GGAT…DVNA), 201–234 (MGRN…DVNV), 238–268 (RGKT…EIND), 272–301 (DGKT…STDC), and 303–329 (DLVM…KEDF). 2 2-5A binding (P-loop) regions span residues 229-242 (GADV…GKTP) and 253-275 (GLVQ…DGKT). The region spanning 365–586 (IDEKYKIADT…LSDLLGHPFF (222 aa)) is the Protein kinase domain. The C6-type; atypical zinc-finger motif lies at 395-444 (CEGSPRAQREVSCLQSSRENSHLVTFYGSESHRGHLFVCVTLCEQTLEAC). The KEN domain maps to 589-723 (WESRYRTLRN…KHFPQTHSPN (135 aa)). Lys684 carries the post-translational modification N6-acetyllysine. The tract at residues 715–741 (HFPQTHSPNKPQCDGAGGASGLASPGC) is disordered.

It belongs to the protein kinase superfamily. In terms of assembly, monomer (inactive form) or homodimer. Interacts with ABCE1; this interaction inhibits the RNASEL. Requires Mn(2+) as cofactor. The cofactor is Mg(2+). As to expression, highly expressed in spleen and thymus followed by prostate, testis, uterus, small intestine, colon and peripheral blood leukocytes.

Its subcellular location is the cytoplasm. It is found in the mitochondrion. Its activity is regulated as follows. After binding to 2-5A (5'-phosphorylated 2',5'-linked oligoadenylates) the homodimerization and subsequent activation occurs. Inhibited by RNASEL inhibitor ABCE1/RLI, a cytoplasmic member of the ATP-binding cassette (ABC) transporter family. Endoribonuclease that functions in the interferon (IFN) antiviral response. In INF treated and virus infected cells, RNASEL probably mediates its antiviral effects through a combination of direct cleavage of single-stranded viral RNAs, inhibition of protein synthesis through the degradation of rRNA, induction of apoptosis, and induction of other antiviral genes. RNASEL mediated apoptosis is the result of a JNK-dependent stress-response pathway leading to cytochrome c release from mitochondria and caspase-dependent apoptosis. Therefore, activation of RNASEL could lead to elimination of virus infected cells under some circumstances. In the crosstalk between autophagy and apoptosis proposed to induce autophagy as an early stress response to small double-stranded RNA and at later stages of prolonged stress to activate caspase-dependent proteolytic cleavage of BECN1 to terminate autophagy and promote apoptosis. Might play a central role in the regulation of mRNA turnover. Cleaves 3' of UpNp dimers, with preference for UU and UA sequences, to sets of discrete products ranging from between 4 and 22 nucleotides in length. This Homo sapiens (Human) protein is 2-5A-dependent ribonuclease (RNASEL).